Reading from the N-terminus, the 623-residue chain is V-type proton ATPase catalytic subunit A (623 aa).

252 to 259 (GAFGCGKT) contacts ATP.

Belongs to the ATPase alpha/beta chains family. V-ATPase is a heteromultimeric enzyme composed of a peripheral catalytic V1 complex (components A to H) attached to an integral membrane V0 proton pore complex (components: a, c, c'', d and e). Binds to the deubiquitinating enzyme AMSH3.

The protein localises to the vacuole membrane. The enzyme catalyses ATP + H2O + 4 H(+)(in) = ADP + phosphate + 5 H(+)(out). Its function is as follows. Catalytic subunit of the peripheral V1 complex of vacuolar ATPase. V-ATPase vacuolar ATPase is responsible for acidifying a variety of intracellular compartments in eukaryotic cells. The protein is V-type proton ATPase catalytic subunit A (VHA-A) of Arabidopsis thaliana (Mouse-ear cress).